A 173-amino-acid chain; its full sequence is Large ribosomal subunit protein uL18 (173 aa).

This sequence belongs to the universal ribosomal protein uL18 family. As to quaternary structure, part of the 50S ribosomal subunit. Contacts the 5S and 23S rRNAs.

Functionally, this is one of the proteins that bind and probably mediate the attachment of the 5S RNA into the large ribosomal subunit, where it forms part of the central protuberance. The protein is Large ribosomal subunit protein uL18 of Methanococcoides burtonii (strain DSM 6242 / NBRC 107633 / OCM 468 / ACE-M).